A 337-amino-acid polypeptide reads, in one-letter code: GTPase Obg (337 aa).

Residues 1 to 159 (MKFVDSATIS…FELEMELKLM (159 aa)) form the Obg domain. The region spanning 160 to 322 (ADVGLVGFPN…LKDELWRQVS (163 aa)) is the OBG-type G domain. GTP is bound by residues 166–173 (GFPNAGKS), 191–195 (FTTLV), 213–216 (DIPG), 280–283 (TKMD), and 303–305 (SSV). Mg(2+) is bound by residues Ser173 and Thr193.

It belongs to the TRAFAC class OBG-HflX-like GTPase superfamily. OBG GTPase family. Monomer. Mg(2+) serves as cofactor.

The protein localises to the cytoplasm. An essential GTPase which binds GTP, GDP and possibly (p)ppGpp with moderate affinity, with high nucleotide exchange rates and a fairly low GTP hydrolysis rate. Plays a role in control of the cell cycle, stress response, ribosome biogenesis and in those bacteria that undergo differentiation, in morphogenesis control. This is GTPase Obg from Chlorobium phaeobacteroides (strain DSM 266 / SMG 266 / 2430).